The chain runs to 258 residues: Hydroxyethylthiazole kinase (258 aa).

Substrate is bound at residue Met-37. ATP-binding residues include Arg-112 and Thr-158. Ala-185 is a substrate binding site.

It belongs to the Thz kinase family. Mg(2+) serves as cofactor.

It carries out the reaction 5-(2-hydroxyethyl)-4-methylthiazole + ATP = 4-methyl-5-(2-phosphooxyethyl)-thiazole + ADP + H(+). Its pathway is cofactor biosynthesis; thiamine diphosphate biosynthesis; 4-methyl-5-(2-phosphoethyl)-thiazole from 5-(2-hydroxyethyl)-4-methylthiazole: step 1/1. Catalyzes the phosphorylation of the hydroxyl group of 4-methyl-5-beta-hydroxyethylthiazole (THZ). This is Hydroxyethylthiazole kinase from Rhizobium etli (strain CIAT 652).